A 243-amino-acid polypeptide reads, in one-letter code: Ribonuclease PH (243 aa).

Residues arginine 91 and 129–131 (GTR) each bind phosphate.

The protein belongs to the RNase PH family. As to quaternary structure, homohexameric ring arranged as a trimer of dimers.

It carries out the reaction tRNA(n+1) + phosphate = tRNA(n) + a ribonucleoside 5'-diphosphate. Functionally, phosphorolytic 3'-5' exoribonuclease that plays an important role in tRNA 3'-end maturation. Removes nucleotide residues following the 3'-CCA terminus of tRNAs; can also add nucleotides to the ends of RNA molecules by using nucleoside diphosphates as substrates, but this may not be physiologically important. Probably plays a role in initiation of 16S rRNA degradation (leading to ribosome degradation) during starvation. This Burkholderia lata (strain ATCC 17760 / DSM 23089 / LMG 22485 / NCIMB 9086 / R18194 / 383) protein is Ribonuclease PH.